The chain runs to 390 residues: Transforming growth factor beta-1 proprotein (390 aa).

An N-terminal signal peptide occupies residues methionine 1–glycine 29. Residues leucine 30–proline 74 are straightjacket domain. Residues glutamate 75–leucine 271 are arm domain. 3 N-linked (GlcNAc...) asparagine glycosylation sites follow: asparagine 82, asparagine 136, and asparagine 176. The bowtie tail stretch occupies residues aspartate 226–glycine 252. A Cell attachment site motif is present at residues arginine 244–aspartate 246. Intrachain disulfides connect cysteine 285-cysteine 294, cysteine 293-cysteine 356, cysteine 322-cysteine 387, and cysteine 326-cysteine 389.

Belongs to the TGF-beta family. As to quaternary structure, homodimer; disulfide-linked. Interacts with the serine proteases, HTRA1 and HTRA3: the interaction with either inhibits TGFB1-mediated signaling and the HTRA protease activity is required for this inhibition. May interact with THSD4; this interaction may lead to sequestration by FBN1 microfibril assembly and attenuation of TGFB signaling. Interacts with CD109, DPT and ASPN. Interacts with EFEMP2. Interacts with TSKU; the interaction contributes to regulation of the hair cycle. Interacts with TGFBR3. Homodimer; disulfide-linked. Interacts with transforming growth factor beta-1 (TGF-beta-1) chain; interaction is non-covalent and maintains TGF-beta-1 in a latent state; each latency-associated peptide (LAP) monomer interacts with TGF-beta-1 in the other monomer. Interacts with LTBP1; leading to regulation of TGF-beta-1 activation. Interacts with LRRC32/GARP; leading to regulation of TGF-beta-1 activation on the surface of activated regulatory T-cells (Tregs). Interacts with LRRC33/NRROS; leading to regulation of TGF-beta-1 in macrophages and microglia. Interacts (via cell attachment site) with integrins ITGAV and ITGB6 (ITGAV:ITGB6), leading to release of the active TGF-beta-1. Interacts with NREP; the interaction results in a decrease in TGFB1 autoinduction. Interacts with HSP90AB1; inhibits latent TGFB1 activation. In terms of assembly, homodimer; disulfide-linked. Interacts with TGF-beta receptors (TGFBR1 and TGFBR2), leading to signal transduction. Post-translationally, transforming growth factor beta-1 proprotein: The precursor proprotein is cleaved in the Golgi apparatus by FURIN to form Transforming growth factor beta-1 (TGF-beta-1) and Latency-associated peptide (LAP) chains, which remain non-covalently linked, rendering TGF-beta-1 inactive. In terms of processing, N-glycosylated. Deglycosylation leads to activation of Transforming growth factor beta-1 (TGF-beta-1); mechanisms triggering deglycosylation-driven activation of TGF-beta-1 are however unclear.

The protein resides in the secreted. The protein localises to the extracellular space. It is found in the extracellular matrix. Its function is as follows. Transforming growth factor beta-1 proprotein: Precursor of the Latency-associated peptide (LAP) and Transforming growth factor beta-1 (TGF-beta-1) chains, which constitute the regulatory and active subunit of TGF-beta-1, respectively. Required to maintain the Transforming growth factor beta-1 (TGF-beta-1) chain in a latent state during storage in extracellular matrix. Associates non-covalently with TGF-beta-1 and regulates its activation via interaction with 'milieu molecules', such as LTBP1, LRRC32/GARP and LRRC33/NRROS, that control activation of TGF-beta-1. Interaction with LRRC33/NRROS regulates activation of TGF-beta-1 in macrophages and microglia. Interaction with LRRC32/GARP controls activation of TGF-beta-1 on the surface of activated regulatory T-cells (Tregs). Interaction with integrins (ITGAV:ITGB6 or ITGAV:ITGB8) results in distortion of the Latency-associated peptide chain and subsequent release of the active TGF-beta-1. In terms of biological role, multifunctional protein that regulates the growth and differentiation of various cell types and is involved in various processes, such as normal development, immune function, microglia function and responses to neurodegeneration. Activation into mature form follows different steps: following cleavage of the proprotein in the Golgi apparatus, Latency-associated peptide (LAP) and Transforming growth factor beta-1 (TGF-beta-1) chains remain non-covalently linked rendering TGF-beta-1 inactive during storage in extracellular matrix. At the same time, LAP chain interacts with 'milieu molecules', such as LTBP1, LRRC32/GARP and LRRC33/NRROS that control activation of TGF-beta-1 and maintain it in a latent state during storage in extracellular milieus. TGF-beta-1 is released from LAP by integrins (ITGAV:ITGB6 or ITGAV:ITGB8): integrin-binding to LAP stabilizes an alternative conformation of the LAP bowtie tail and results in distortion of the LAP chain and subsequent release of the active TGF-beta-1. Once activated following release of LAP, TGF-beta-1 acts by binding to TGF-beta receptors (TGFBR1 and TGFBR2), which transduce signal. While expressed by many cells types, TGF-beta-1 only has a very localized range of action within cell environment thanks to fine regulation of its activation by Latency-associated peptide chain (LAP) and 'milieu molecules'. Plays an important role in bone remodeling: acts as a potent stimulator of osteoblastic bone formation, causing chemotaxis, proliferation and differentiation in committed osteoblasts. Can promote either T-helper 17 cells (Th17) or regulatory T-cells (Treg) lineage differentiation in a concentration-dependent manner. At high concentrations, leads to FOXP3-mediated suppression of RORC and down-regulation of IL-17 expression, favoring Treg cell development. At low concentrations in concert with IL-6 and IL-21, leads to expression of the IL-17 and IL-23 receptors, favoring differentiation to Th17 cells. Stimulates sustained production of collagen through the activation of CREB3L1 by regulated intramembrane proteolysis (RIP). Mediates SMAD2/3 activation by inducing its phosphorylation and subsequent translocation to the nucleus. Positively regulates odontoblastic differentiation in dental papilla cells, via promotion of IPO7-mediated translocation of phosphorylated SMAD2 to the nucleus and subsequent transcription of target genes. Can induce epithelial-to-mesenchymal transition (EMT) and cell migration in various cell types. This chain is Transforming growth factor beta-1 proprotein (TGFB1), found in Cavia porcellus (Guinea pig).